A 2515-amino-acid chain; its full sequence is MARKLSVLEVLLIIFCLIVVTIDILLLLLVLEETSDTSFTPECPEIPQSERIDCTPDQEVTEDICRWQYKCCWSPVADANVPRCFFPWNWGYEASNGHTNTSTGFTAQLKRLPSPSLFGNDVATTLFTAEYQTSNRFHFKITDFNNIRYEVSHENINLVDGIADASNLSYYVEVTDKPFSIKIMRTSNRRVLLDTSIGPLQFAQQYLQLSFRLPSANVYGLGEHVHQQYRHNMTWKTWPIFTRDATPTEGMINLYGAHTFFLCLEDARGSSFGVFLMNSNAMEVTLQPAPAITYRTIGGILDFYVFLGNTPEQVVQEYLELVGRPFFPPYWSLGFQLSRRDYGGINKLKEVVSRNRLAEIPYDVQYSDIDYMDGKKDFTVDEVAYSGLPDFVKELHDNGQKYLIIMNPGISKNSNYEPYNNGSLKRVWILGSNGFAVGEGYPGPTVFPDYTNPVCTEWWTDQVAKFHDHLEFDGVWIEMNEVSSLLQASNNQCESNNLNFPPFLPRVLDHLLFARTLCMDTEFHGGLHYDIHSLYGHSMARTTNLALETIFMNNRSFILSRSTFAGSGKFAAHWLGDNAATWDDLRWSIPTILEFNLFGIPMVGANICGYNNNVTEELCRRWMQLGAFYPLPRNHNGPGFRDQDPAAFGVDSLLLKSSRHYLNIRYTLLPYLYTLFYHAHTRGETVARPLVHEFYQDSATWDVHEQFLWGPGLLITPVLYEGVDEVKAYIPDATWYDYETGVAISWRKQLVNMLLPGDKIGLHLRGGYIFPTQKPNTTTEASRRNSLGLIIALDYKREAKGELYWDDGVSKDAVTEKKYILYDFSVTSNHLQAKIINNNYMDTDNLMFTDITILGMDKQPANFIVLLNNVATSSPSVVYNASTKVVTITDLQGLVLGQEFSIRWNLPVSDLEKFNCYPDDPTASEESCRQRGCLWEDTSTPGVPTCYYDTIPNYVASDIQYLNTSITADLSLPMAPESAAAAASDSLSAKISFLHLKVIYHTATMLQVKIYDPTNKRYEVPVPLNTPPQPVGDPENRLYDVRIQNNPFGIQIQRKNSSTVIWDSQLPGFIFNDMFLSISTRLPSQYIYGFGETEHTTFRRNMNWNTWGMFAHDEPPAYKKNSYGVHPYYMALEEDGSAHGVLLLNSNAMDVTLQPTPALTYRTTGGILDFYIVLGPTPELVTQQYTELIGRPAMIPYWALGFHLSRYGYQNDAEISSLYDAMVAAQIPYDVQHVDIDYMNRKLDFTLSANFQNLSLLIEQMKKNGMRFILILDPAISGNETQYLPFIRGQENNVFIKWPDTNDIVWGKVWPDLPNVIVDGSLDHETQVKLYRAYVAFPDFFRNSTAAWWKKEIEELYANPREPEKSLKFDGLWIDMNEPSNFVDGSVRGCSNEMLNNPPYMPYLESRDKGLSSKTLCMESQQILPDSSPVEHYNVHNLYGWSQTRPTYEAVQEVTGQRGVIITRSTFPSSGRWGGHRLGNNTAAWDQLGKSIIGMMEFSLFGIPYTGADICGFFGDAEYEMCVRWMQLGAFYPFSRNHNNIGTRRQDPVAWNSTFEMLSRKVLETRYTLLPYLYTLMHKAHVEGSTVVRPLLHEFTDDRTTWDIDRQFMLGPAILISPVLETSTFEISAYFPRARWYDYSTGTSSTSTGQRKILKAPLDHINLHVRGGYILPWQEPAMNTHSSRQNFMGLIVALDDNGTAEGQVFWDDGQSIDTYENGNYFLANFIAAQNILQIQTIHNKYLSDSNPLKVGYIRIWGVNTYVTQVSFTYDNRQFMETNFKSEPYNQILTIQLTDKTINLEKLTEVTWIDGGPVLPTPTKTSTIPMSSHPSPSTTNATSSETITSSASANTTTGTTDTVPITTTSFPSTTSVTTNTTVPDTTSPFPTSTTNASTNATVPITTTPFPTSTIGVTTNATVPNTTAPFPTNASTASTNATVPITTTCFATSTIGVTTNATVPDTTAPFPTNTTTASTNATIPITTTPFATSTISVTTSTTVPDTTAPFPTSTTSASTNATPVPITTTLFATSTIGVTTGTTVPDTTAPFPTSTTSTSTSATVPITTTPSPTNTADANTSNTVPNTTMPSPTSSTTVSTIATVPISVTPSLTSTADATISTTVLIATTSSLTGTTDVSTSTTINNISTPVQTNTTNASTSTNVANITATSHTSTDDTVPNNTVPVTAIPSLANTGVDTTSNSFSIMTTSFSESTNAMNTTVIMATTSPTSTDVASTNNDASMTNFLLATMSAGNITSNSISITTTSFGNSVPFVTTPSPSTDATTTSNNTNPGMTTYYQTSPTIPTHTLTSIPSSITSILSMFPTSNTFTTDKITNFTTPTNANTIIFNTLDTKSTMVIDATVTTTSTKDNTMSPDTTVTSIDKFTTHITQFATPHSATTTTLALSHTSLAPTNLSNLGTMDITDADNSSSVTGNTTHISVSNLTTASVTITATGLDSQTPHMVINSVATYLPITATSATTDTTNITKYALNTTTPDSTVHTSATAPTYIANAINATQVP.

The Cytoplasmic segment spans residues methionine 1–glutamate 9. Residues valine 10–valine 30 traverse the membrane as a helical segment. Over leucine 31–valine 482 the chain is Lumenal. The P-type 1 domain maps to proline 41–tryptophan 88. 3 disulfide bridges follow: cysteine 43–cysteine 72, cysteine 54–cysteine 71, and cysteine 65–cysteine 84. The tract at residues serine 152–valine 865 is maltase. A glycan (N-linked (GlcNAc...) asparagine) is linked at asparagine 167. Tyrosine 371 bears the Sulfotyrosine mark. N-linked (GlcNAc...) asparagine glycosylation is present at asparagine 421. Glutamate 478 (nucleophile) is an active-site residue. Residue glutamate 481 is part of the active site. 3 disulfides stabilise this stretch: cysteine 608–cysteine 619, cysteine 916–cysteine 933, and cysteine 928–cysteine 946. Asparagine 613 carries N-linked (GlcNAc...) asparagine glycosylation. The P-type 2 domain occupies tryptophan 904–threonine 950. The interval proline 1023 to serine 1766 is glucoamylase. Position 1238 is a sulfotyrosine (tyrosine 1238). The active-site Nucleophile is aspartate 1375. Glutamate 1378 is a catalytic residue. 3 disordered regions span residues threonine 1816–threonine 1901, serine 1994–alanine 2015, and threonine 2037–threonine 2091. Over residues proline 1817 to proline 1831 the composition is skewed to polar residues. Residues serine 1832–threonine 1901 show a composition bias toward low complexity. A glycan (N-linked (GlcNAc...) asparagine) is linked at asparagine 2249.

Belongs to the glycosyl hydrolase 31 family.

It localises to the membrane. The enzyme catalyses Hydrolysis of terminal (1-&gt;4)-linked alpha-D-glucose residues successively from non-reducing ends of the chains with release of beta-D-glucose.. The sequence is that of Probable maltase-glucoamylase 2 from Homo sapiens (Human).